Consider the following 489-residue polypeptide: Glutamyl-tRNA(Gln) amidotransferase subunit A (489 aa).

Catalysis depends on charge relay system residues Lys77 and Ser152. The active-site Acyl-ester intermediate is the Ser176.

It belongs to the amidase family. GatA subfamily. In terms of assembly, heterotrimer of A, B and C subunits.

It carries out the reaction L-glutamyl-tRNA(Gln) + L-glutamine + ATP + H2O = L-glutaminyl-tRNA(Gln) + L-glutamate + ADP + phosphate + H(+). Its function is as follows. Allows the formation of correctly charged Gln-tRNA(Gln) through the transamidation of misacylated Glu-tRNA(Gln) in organisms which lack glutaminyl-tRNA synthetase. The reaction takes place in the presence of glutamine and ATP through an activated gamma-phospho-Glu-tRNA(Gln). This is Glutamyl-tRNA(Gln) amidotransferase subunit A from Levilactobacillus brevis (strain ATCC 367 / BCRC 12310 / CIP 105137 / JCM 1170 / LMG 11437 / NCIMB 947 / NCTC 947) (Lactobacillus brevis).